Here is a 150-residue protein sequence, read N- to C-terminus: Arginine repressor (150 aa).

Belongs to the ArgR family.

The protein localises to the cytoplasm. The protein operates within amino-acid biosynthesis; L-arginine biosynthesis [regulation]. In terms of biological role, regulates arginine biosynthesis genes. The chain is Arginine repressor from Clostridium botulinum (strain ATCC 19397 / Type A).